The following is a 621-amino-acid chain: Phosphomethylpyrimidine synthase (621 aa).

The segment covering 1–23 (MTAPFLSSLSPTSPLASATAPFP) has biased composition (low complexity). The segment at 1-29 (MTAPFLSSLSPTSPLASATAPFPGSRKVY) is disordered. Substrate-binding positions include asparagine 215, methionine 244, tyrosine 273, histidine 309, 329–331 (SRG), 370–373 (DGLR), and glutamate 409. Residue histidine 413 coordinates Zn(2+). Substrate is bound at residue tyrosine 436. Histidine 477 is a binding site for Zn(2+). Cysteine 557, cysteine 560, and cysteine 565 together coordinate [4Fe-4S] cluster.

This sequence belongs to the ThiC family. Homodimer. Requires [4Fe-4S] cluster as cofactor.

It carries out the reaction 5-amino-1-(5-phospho-beta-D-ribosyl)imidazole + S-adenosyl-L-methionine = 4-amino-2-methyl-5-(phosphooxymethyl)pyrimidine + CO + 5'-deoxyadenosine + formate + L-methionine + 3 H(+). It functions in the pathway cofactor biosynthesis; thiamine diphosphate biosynthesis. Its function is as follows. Catalyzes the synthesis of the hydroxymethylpyrimidine phosphate (HMP-P) moiety of thiamine from aminoimidazole ribotide (AIR) in a radical S-adenosyl-L-methionine (SAM)-dependent reaction. The chain is Phosphomethylpyrimidine synthase from Rhodospirillum rubrum (strain ATCC 11170 / ATH 1.1.1 / DSM 467 / LMG 4362 / NCIMB 8255 / S1).